The primary structure comprises 214 residues: Charged multivesicular body protein 2b (214 aa).

Residues 25–55 (QRTITRDRAALEKQERQLELEIKKMAKTGNK) are a coiled coil. The segment at 179-201 (AKAPSAARGLPSASTSKASTISD) is disordered. Over residues 190–199 (SASTSKASTI) the composition is skewed to polar residues. Residues 202–212 (EEIERQLKALG) carry the MIT-interacting motif motif.

This sequence belongs to the SNF7 family. Probable core component of the endosomal sorting required for transport complex III (ESCRT-III). ESCRT-III components are thought to multimerize to form a flat lattice on the perimeter membrane of the endosome.

It localises to the cytoplasm. The protein resides in the cytosol. Its subcellular location is the late endosome membrane. Probable core component of the endosomal sorting required for transport complex III (ESCRT-III) which is involved in multivesicular bodies (MVBs) formation and sorting of endosomal cargo proteins into MVBs. MVBs contain intraluminal vesicles (ILVs) that are generated by invagination and scission from the limiting membrane of the endosome and mostly are delivered to lysosomes enabling degradation of membrane proteins, such as stimulated growth factor receptors, lysosomal enzymes and lipids. This is Charged multivesicular body protein 2b (CHMP2B) from Gallus gallus (Chicken).